The following is a 1063-amino-acid chain: NAD-specific glutamate dehydrogenase (1063 aa).

It belongs to the Glu/Leu/Phe/Val dehydrogenases family. Highly divergent. Homotetramer.

It carries out the reaction L-glutamate + NAD(+) + H2O = 2-oxoglutarate + NH4(+) + NADH + H(+). With respect to regulation, allosterically activated by NADP(+). This is NAD-specific glutamate dehydrogenase from Achlya klebsiana.